The chain runs to 393 residues: Digeranylgeranylglycerophospholipid reductase (393 aa).

The FAD site is built by Ala13, Asp32, Cys43, Ala44, Gly46, Arg95, Val119, Asp274, and Gly286. Lys327 and Gly363 together coordinate a 2,3-bis-O-(geranylgeranyl)-sn-glycerol 1-phospholipid.

It belongs to the geranylgeranyl reductase family. DGGGPL reductase subfamily. FAD is required as a cofactor.

It catalyses the reaction a 2,3-bis-O-phytanyl-sn-glycerol 1-phospholipid + 8 A = a 2,3-bis-O-(geranylgeranyl)-sn-glycerol 1-phospholipid + 8 AH2. It carries out the reaction 2,3-bis-O-(phytanyl)-sn-glycerol 1-phosphate + 8 A = 2,3-bis-O-(geranylgeranyl)-sn-glycerol 1-phosphate + 8 AH2. The catalysed reaction is CDP-2,3-bis-O-(geranylgeranyl)-sn-glycerol + 8 AH2 = CDP-2,3-bis-O-(phytanyl)-sn-glycerol + 8 A. The enzyme catalyses archaetidylserine + 8 AH2 = 2,3-bis-O-phytanyl-sn-glycero-3-phospho-L-serine + 8 A. It participates in membrane lipid metabolism; glycerophospholipid metabolism. In terms of biological role, is involved in the reduction of 2,3-digeranylgeranylglycerophospholipids (unsaturated archaeols) into 2,3-diphytanylglycerophospholipids (saturated archaeols) in the biosynthesis of archaeal membrane lipids. Catalyzes the formation of archaetidic acid (2,3-di-O-phytanyl-sn-glyceryl phosphate) from 2,3-di-O-geranylgeranylglyceryl phosphate (DGGGP) via the hydrogenation of each double bond of the isoprenoid chains. Is also probably able to reduce double bonds of geranyl groups in CDP-2,3-bis-O-(geranylgeranyl)-sn-glycerol and archaetidylserine, thus acting at various stages in the biosynthesis of archaeal membrane lipids. This Pyrococcus furiosus (strain ATCC 43587 / DSM 3638 / JCM 8422 / Vc1) protein is Digeranylgeranylglycerophospholipid reductase.